The primary structure comprises 262 residues: MKRLEGKVAIVTSSTRGIGRASAEALAKEGALVYLAARSEELANEVIADIKKQGGVAKFVYFNAREEETYTSMVEKVAEAEGRIDILVNNYGGTNVNLDKNLTAGDTDEFFRILKDNVQSVYLPAKAAIPHMEKVGGGSIVNISTIGSVVPDISRIAYCVSKSAINSLTQNIALQYARKNIRCNAVLPGLIGTRAALENMTDEFRDSFLGHVPLNRVGRPEDIANAVLYYASDDSGYVTGMIHEVAGGFALGTPQYSEYCPR.

Residues 13 to 18 (SSTRGI), Arg-38, 63 to 64 (NA), and Asn-90 each bind NADP(+). Taurochenodeoxycholate-binding residues include Thr-145 and Tyr-158. NADP(+)-binding positions include Tyr-158, Lys-162, and 191–195 (IGTRA). Tyr-158 functions as the Proton acceptor in the catalytic mechanism.

Belongs to the short-chain dehydrogenases/reductases (SDR) family. Homotetramer. A dynamic equilibrium between dimers and tetramers seems to exist.

It carries out the reaction cholate + NADP(+) = 3alpha,12alpha-dihydroxy-7-oxo-5beta-cholanate + NADPH + H(+). The enzyme catalyses chenodeoxycholate + NADP(+) = 7-oxolithocholate + NADPH + H(+). The catalysed reaction is 3alpha,7alpha-dihydroxy-12-oxo-5beta-cholanate + NADP(+) = 7,12-dioxo-lithocholate + NADPH + H(+). It catalyses the reaction 7alpha-hydroxy-3,12-dioxo-5beta-cholanate + NADP(+) = dehydrocholate + NADPH + H(+). It carries out the reaction glycochenodeoxycholate + NADP(+) = 7-oxoglycolithocholate + NADPH + H(+). The enzyme catalyses taurochenodeoxycholate + NADP(+) = 7-oxotaurolithocholate + NADPH + H(+). Its activity is regulated as follows. Activated by metal ions such as Mg(2+), Na(+) and K(+). Its function is as follows. 7alpha-hydroxysteroid dehydrogenase that catalyzes the NADP(+)-dependent oxidation of the 7alpha-hydroxy group of 7alpha-hydroxysteroids, such as cholate, chenodeoxycholate, glycochenodeoxycholate and taurochenodeoxycholate, to the corresponding 7-oxosteroids. Is also able to catalyze the reverse reduction reactions. Together with 7beta-HSDH encoded in the adjacent gene, is likely involved in the epimerization of the hydroxy group at C-7 of primary bile acids through 7-keto bile acid intermediates. This Clostridium sardiniense (Clostridium absonum) protein is 7alpha-hydroxysteroid dehydrogenase.